Reading from the N-terminus, the 640-residue chain is 1-deoxy-D-xylulose-5-phosphate synthase (640 aa).

Thiamine diphosphate contacts are provided by residues His-78 and 119–121; that span reads GHS. Residue Asp-151 coordinates Mg(2+). Thiamine diphosphate-binding positions include 152–153, Asn-180, Tyr-289, and Glu-371; that span reads GA. Asn-180 serves as a coordination point for Mg(2+).

It belongs to the transketolase family. DXPS subfamily. Homodimer. Mg(2+) serves as cofactor. It depends on thiamine diphosphate as a cofactor.

The enzyme catalyses D-glyceraldehyde 3-phosphate + pyruvate + H(+) = 1-deoxy-D-xylulose 5-phosphate + CO2. The protein operates within metabolic intermediate biosynthesis; 1-deoxy-D-xylulose 5-phosphate biosynthesis; 1-deoxy-D-xylulose 5-phosphate from D-glyceraldehyde 3-phosphate and pyruvate: step 1/1. Catalyzes the acyloin condensation reaction between C atoms 2 and 3 of pyruvate and glyceraldehyde 3-phosphate to yield 1-deoxy-D-xylulose-5-phosphate (DXP). In Bartonella quintana (strain Toulouse) (Rochalimaea quintana), this protein is 1-deoxy-D-xylulose-5-phosphate synthase.